The primary structure comprises 96 residues: Aspartyl/glutamyl-tRNA(Asn/Gln) amidotransferase subunit C (96 aa).

Belongs to the GatC family. Heterotrimer of A, B and C subunits.

The catalysed reaction is L-glutamyl-tRNA(Gln) + L-glutamine + ATP + H2O = L-glutaminyl-tRNA(Gln) + L-glutamate + ADP + phosphate + H(+). It catalyses the reaction L-aspartyl-tRNA(Asn) + L-glutamine + ATP + H2O = L-asparaginyl-tRNA(Asn) + L-glutamate + ADP + phosphate + 2 H(+). Allows the formation of correctly charged Asn-tRNA(Asn) or Gln-tRNA(Gln) through the transamidation of misacylated Asp-tRNA(Asn) or Glu-tRNA(Gln) in organisms which lack either or both of asparaginyl-tRNA or glutaminyl-tRNA synthetases. The reaction takes place in the presence of glutamine and ATP through an activated phospho-Asp-tRNA(Asn) or phospho-Glu-tRNA(Gln). The polypeptide is Aspartyl/glutamyl-tRNA(Asn/Gln) amidotransferase subunit C (Exiguobacterium sp. (strain ATCC BAA-1283 / AT1b)).